The following is a 138-amino-acid chain: Ribosome-binding factor A (138 aa).

The segment at 119 to 138 (DMDEKKNSDEKRDSDEKLED) is disordered.

This sequence belongs to the RbfA family. Monomer. Binds 30S ribosomal subunits, but not 50S ribosomal subunits or 70S ribosomes.

The protein resides in the cytoplasm. Its function is as follows. One of several proteins that assist in the late maturation steps of the functional core of the 30S ribosomal subunit. Associates with free 30S ribosomal subunits (but not with 30S subunits that are part of 70S ribosomes or polysomes). Required for efficient processing of 16S rRNA. May interact with the 5'-terminal helix region of 16S rRNA. This Alkaliphilus metalliredigens (strain QYMF) protein is Ribosome-binding factor A.